Reading from the N-terminus, the 478-residue chain is Quinoprotein glucose dehydrogenase B (478 aa).

An N-terminal signal peptide occupies residues 1–24 (MNKHLLAKIALLSAVQLVTLSAFA). 2 residues coordinate D-glucose: glutamine 100 and aspartate 167. Residue histidine 168 is the Proton acceptor of the active site. Glutamine 192 and arginine 252 together coordinate D-glucose. The tract at residues 252–253 (RN) is PQQ. The Ca(2+) site is built by glycine 271, proline 272, glutamate 277, tyrosine 287, alanine 293, tyrosine 295, aspartate 297, and glutamate 333. Tyrosine 367, threonine 372, and lysine 401 together coordinate pyrroloquinoline quinone. Residues 430–432 (RYR) form a PQQ region.

Belongs to the PQQ oxidoreductase GdhB family. As to quaternary structure, homodimer. Pyrroloquinoline quinone is required as a cofactor. Ca(2+) serves as cofactor.

It carries out the reaction a ubiquinone + D-glucose = D-glucono-1,5-lactone + a ubiquinol. In terms of biological role, oxidizes glucose to gluconolactone. In Acinetobacter calcoaceticus, this protein is Quinoprotein glucose dehydrogenase B (gdhB).